Consider the following 356-residue polypeptide: MRRELLLERIDKLKATMPWYILEYYQSKLAVPYSFTTLYEYLKEYDRFFNWVLESGITNASHIAEIPLSVLENMTKKDMEAFILYLRERPLLNANTTQNGVSQTTINRTLSALSSLYKYLTEEVENEQGEPYFYRNVMKKVATKKKKETLAARAENIKQKLFLGDETEEFLQYIDREYPKKLSNRALSSFNKNKERDLAIIALLLASGVRLSEAVNLDLKDINLKMMVIEVTRKGGKRDSVNVAAFAKPYLEEYLSIRSKRYKAEKTDTAFFLTEYRGTPNRIDASSVEKMVAKYSEDFKVRVTPHKLRHTLATRLYDATKSQVLVSHQLGHASTQVTDLYTHIVNDEQKNALNKL.

The 106-residue stretch at 16–121 (TMPWYILEYY…ALSSLYKYLT (106 aa)) folds into the Core-binding (CB) domain. The 186-residue stretch at 169–354 (EFLQYIDREY…VNDEQKNALN (186 aa)) folds into the Tyr recombinase domain. Residues R210, K234, H306, R309, and H332 contribute to the active site. The active-site O-(3'-phospho-DNA)-tyrosine intermediate is Y341.

The protein belongs to the 'phage' integrase family. XerS subfamily.

The protein resides in the cytoplasm. Its activity is regulated as follows. FtsK is required for recombination. Its function is as follows. Site-specific tyrosine recombinase, which acts by catalyzing the cutting and rejoining of the recombining DNA molecules. Essential to convert dimers of the bacterial chromosome into monomers to permit their segregation at cell division. The polypeptide is Tyrosine recombinase XerS (Streptococcus gordonii (strain Challis / ATCC 35105 / BCRC 15272 / CH1 / DL1 / V288)).